A 308-amino-acid polypeptide reads, in one-letter code: Ribosomal RNA small subunit methyltransferase H (308 aa).

S-adenosyl-L-methionine-binding positions include 35–37, D55, F79, D100, and Q107; that span reads GGH.

It belongs to the methyltransferase superfamily. RsmH family.

It localises to the cytoplasm. It catalyses the reaction cytidine(1402) in 16S rRNA + S-adenosyl-L-methionine = N(4)-methylcytidine(1402) in 16S rRNA + S-adenosyl-L-homocysteine + H(+). Specifically methylates the N4 position of cytidine in position 1402 (C1402) of 16S rRNA. This is Ribosomal RNA small subunit methyltransferase H from Dechloromonas aromatica (strain RCB).